Here is a 215-residue protein sequence, read N- to C-terminus: Probable transaldolase (215 aa).

The active-site Schiff-base intermediate with substrate is the Lys-83.

The protein belongs to the transaldolase family. Type 3B subfamily.

It is found in the cytoplasm. It catalyses the reaction D-sedoheptulose 7-phosphate + D-glyceraldehyde 3-phosphate = D-erythrose 4-phosphate + beta-D-fructose 6-phosphate. It participates in carbohydrate degradation; pentose phosphate pathway; D-glyceraldehyde 3-phosphate and beta-D-fructose 6-phosphate from D-ribose 5-phosphate and D-xylulose 5-phosphate (non-oxidative stage): step 2/3. Its function is as follows. Transaldolase is important for the balance of metabolites in the pentose-phosphate pathway. The chain is Probable transaldolase from Moorella thermoacetica (strain ATCC 39073 / JCM 9320).